The sequence spans 474 residues: tRNA-2-methylthio-N(6)-dimethylallyladenosine synthase (474 aa).

The MTTase N-terminal domain occupies 3 to 120; the sequence is KKLHIKTWGC…LPEMIDQIRD (118 aa). 6 residues coordinate [4Fe-4S] cluster: cysteine 12, cysteine 49, cysteine 83, cysteine 157, cysteine 161, and cysteine 164. In terms of domain architecture, Radical SAM core spans 143-375; it reads RADGPSAFVS…QDRITQQAMR (233 aa). The region spanning 378-441 is the TRAM domain; the sequence is RQMLGTVQRI…TNSLRGTFVR (64 aa).

The protein belongs to the methylthiotransferase family. MiaB subfamily. In terms of assembly, monomer. Requires [4Fe-4S] cluster as cofactor.

The protein resides in the cytoplasm. The enzyme catalyses N(6)-dimethylallyladenosine(37) in tRNA + (sulfur carrier)-SH + AH2 + 2 S-adenosyl-L-methionine = 2-methylsulfanyl-N(6)-dimethylallyladenosine(37) in tRNA + (sulfur carrier)-H + 5'-deoxyadenosine + L-methionine + A + S-adenosyl-L-homocysteine + 2 H(+). Catalyzes the methylthiolation of N6-(dimethylallyl)adenosine (i(6)A), leading to the formation of 2-methylthio-N6-(dimethylallyl)adenosine (ms(2)i(6)A) at position 37 in tRNAs that read codons beginning with uridine. In Shewanella sediminis (strain HAW-EB3), this protein is tRNA-2-methylthio-N(6)-dimethylallyladenosine synthase.